A 266-amino-acid polypeptide reads, in one-letter code: DNA repair protein RecO (266 aa).

The protein belongs to the RecO family.

In terms of biological role, involved in DNA repair and RecF pathway recombination. The protein is DNA repair protein RecO of Synechococcus elongatus (strain ATCC 33912 / PCC 7942 / FACHB-805) (Anacystis nidulans R2).